A 492-amino-acid polypeptide reads, in one-letter code: Protein adenylyltransferase Fic (492 aa).

Positions 1 to 18 are enriched in low complexity; that stretch reads MGTEAEQPSPPAQQQDQE. The interval 1 to 26 is disordered; the sequence is MGTEAEQPSPPAQQQDQENPPLCKAQ. The helical transmembrane segment at 33–55 threads the bilayer; the sequence is LYRFVLIFVAGSLAAWTFHALSS. TPR repeat units lie at residues 118-151 and 152-186; these read ALGA…APRH and PEVL…SPSN. The short motif at 243–248 is the Inhibitory (S/T)XXXE(G/N) motif element; that stretch reads SVGIEG. ATP is bound by residues Glu247 and 328–331; that span reads VGGH. The Fido domain occupies 297–432; it reads ITIKDILELH…IRPFVRFIAD (136 aa). His375 is an active-site residue. Residues 379–386, 411–412, and Asn419 each bind ATP; these read DGNGRTSR and YY.

It belongs to the fic family. As to quaternary structure, homodimer; homodimerization may regulate adenylyltransferase and phosphodiesterase activities.

The protein localises to the membrane. The catalysed reaction is L-tyrosyl-[protein] + ATP = O-(5'-adenylyl)-L-tyrosyl-[protein] + diphosphate. It catalyses the reaction L-threonyl-[protein] + ATP = 3-O-(5'-adenylyl)-L-threonyl-[protein] + diphosphate. The enzyme catalyses 3-O-(5'-adenylyl)-L-threonyl-[protein] + H2O = L-threonyl-[protein] + AMP + H(+). With respect to regulation, the side chain of Glu-247 determines which of the two opposing activities (AMPylase or de-AMPylase) will take place. In response to endoplasmic reticulum stress, mediates de-AMPylase activity. Adenylyltransferase activity is inhibited by the inhibitory helix present at the N-terminus: Glu-247 binds ATP and competes with ATP-binding at Arg-386, thereby preventing adenylyltransferase activity. In unstressed cells, disengagement of Glu-247 promotes adenylyltransferase activity. Activation dissociates ATP-binding from Glu-247, allowing ordered binding of the entire ATP moiety with the alpha-phosphate in an orientation that is productive for accepting an incoming target hydroxyl side chain. Functionally, protein that can both mediate the addition of adenosine 5'-monophosphate (AMP) to specific residues of target proteins (AMPylation), and the removal of the same modification from target proteins (de-AMPylation), depending on the context. The side chain of Glu-247 determines which of the two opposing activities (AMPylase or de-AMPylase) will take place. Acts as a key regulator of the unfolded protein response (UPR) by mediating AMPylation or de-AMPylation of Hsc70-3/BiP. In unstressed cells, acts as an adenylyltransferase by mediating AMPylation of Hsc70-3/BiP at 'Thr-518', thereby inactivating it. In response to endoplasmic reticulum stress, acts as a phosphodiesterase by mediating removal of ATP (de-AMPylation) from Hsc70-3/BiP at 'Thr-518', leading to restore HSPA5/BiP activity. This is Protein adenylyltransferase Fic from Drosophila melanogaster (Fruit fly).